The sequence spans 61 residues: Small ribosomal subunit protein uS14 (61 aa).

Residues cysteine 24, cysteine 27, cysteine 40, and cysteine 43 each coordinate Zn(2+).

Belongs to the universal ribosomal protein uS14 family. Zinc-binding uS14 subfamily. Part of the 30S ribosomal subunit. Contacts proteins S3 and S10. Requires Zn(2+) as cofactor.

Functionally, binds 16S rRNA, required for the assembly of 30S particles and may also be responsible for determining the conformation of the 16S rRNA at the A site. The protein is Small ribosomal subunit protein uS14 of Endomicrobium trichonymphae.